Consider the following 477-residue polypeptide: UDP-N-acetylmuramate--L-alanine ligase (477 aa).

122–128 (GTHGKTT) lines the ATP pocket.

Belongs to the MurCDEF family.

It localises to the cytoplasm. It carries out the reaction UDP-N-acetyl-alpha-D-muramate + L-alanine + ATP = UDP-N-acetyl-alpha-D-muramoyl-L-alanine + ADP + phosphate + H(+). It functions in the pathway cell wall biogenesis; peptidoglycan biosynthesis. Its function is as follows. Cell wall formation. In Xanthomonas oryzae pv. oryzae (strain MAFF 311018), this protein is UDP-N-acetylmuramate--L-alanine ligase.